The primary structure comprises 482 residues: Tektin (482 aa).

Coiled-coil stretches lie at residues 100–129, 171–204, 282–324, 376–407, and 441–478; these read CLAE…QAKI, ARAV…ALRV, RLNE…ALTS, VKVA…DALR, and RTQT…TMGG. The disordered stretch occupies residues 311 to 330; that stretch reads EQARAKGQRSALTSALDDKR. Arg-462 carries the post-translational modification Asymmetric dimethylarginine.

Belongs to the tektin family. Asymmetrically dimethylated at Arg-462 during flagellum resorption. Probably methylated by PRMT1.

It localises to the cytoplasm. The protein resides in the cytoskeleton. It is found in the flagellum axoneme. The protein localises to the flagellum basal body. In terms of biological role, structural component of ciliary and flagellar microtubules. Plays a key role in the assembly or attachment of the inner dynein arm to microtubules in flagella and cilia. Forms filamentous polymers in the walls of ciliary and flagellar microtubules. The polypeptide is Tektin (Chlamydomonas reinhardtii (Chlamydomonas smithii)).